The following is a 231-amino-acid chain: PX domain-containing protein 1 (231 aa).

One can recognise a PX domain in the interval 1 to 134 (MASAVFEGTS…TFFERSPLDQ (134 aa)).

This Bos taurus (Bovine) protein is PX domain-containing protein 1 (PXDC1).